Here is a 459-residue protein sequence, read N- to C-terminus: MTSPAKFKKDKEIIAEYDTQVKEIRAQLTEQMKCLDQQCELRVQLLQDLQDFFRKKAEIEMDYSRNLEKLAEHFLAKTRSTKDQQFKKDQNVLSPVNCWNLLLNQVKWESRDHTTLSDIYLNNIIPRFVQVSEDSGRLFKKSKEVGQQLQDDLMKVLNELYSVMKTYHMYNADSISAQSKLKEAEKQEEKQIGKSVKQEDRQTPCSPDSTANVRIEEKHVRRSSVKKIEKMKEKHQAKYTENKLKAIKAQNEYLLALEATNASVFKYYIHDLSDLIDQCCDLGYHASLNRALRTFLSAELNLEQSKHEGLDAIENAVENLDATSDKQRLMEMYNNVFCPPMKFEFQPHMGDMASQLCAQQPVQSELVQRCQQLQSRLSTLKIENEEVKKTMEATLQTIQDIVTVEDFDVSDCFQYSNSMESVKSTVSETFMSKPSIAKRRANQQETEQFYFTVRECYGF.

One can recognise an F-BAR domain in the interval 22-325 (KEIRAQLTEQ…AVENLDATSD (304 aa)). Residues 181-202 (LKEAEKQEEKQIGKSVKQEDRQ) are compositionally biased toward basic and acidic residues. Residues 181 to 211 (LKEAEKQEEKQIGKSVKQEDRQTPCSPDSTA) form a disordered region. A coiled-coil region spans residues 363-401 (QSELVQRCQQLQSRLSTLKIENEEVKKTMEATLQTIQDI).

As to quaternary structure, homodimer. Interacts (via F-BAR domain) with SRGAP2/SRGAP2A (via F-BAR domain); formation of the heterodimer inhibits SRGAP2/SRGAP2A function. Ubiquitously expressed with higher expression in cerebellum. Probably expressed in fetal and adult neurons (at protein level).

In terms of biological role, human-specific protein that acts as a key modifier of cortical connectivity in the human brain. Acts by inhibiting the functions of ancestral paralog SRGAP2/SRGAP2A, a postsynaptic protein that regulates excitatory and inhibitory synapse maturation and density in cortical pyramidal neurons. SRGAP2C is unstable but is able to heterodimerize with SRGAP2/SRGAP2A, thereby reducing SRGAP2/SRGAP2A levels through proteasome-dependent degradation. Inhibition of SRGAP2/SRGAP2A by SRGAP2C leads to an increase in synaptic density and protracted synaptic maturation of both excitatory and inhibitory synapses. Modifies cortical circuit connectivity by increasing the number of local and long-range cortical inputs received by layer 2/3 pyramidal neurons. Also able to increase the probability of sensory-evoked responses by layer 2/3 pyramidal neurons. The protein is SLIT-ROBO Rho GTPase-activating protein 2C of Homo sapiens (Human).